Reading from the N-terminus, the 363-residue chain is Glyceraldehyde-3-phosphate dehydrogenase, muscle (363 aa).

Positions 1-176 (MVKVGVNGFG…KYDKSLKIVS (176 aa)) are interaction with WARS. K3 is modified (N6,N6-dimethyllysine). Residue N7 is modified to Deamidated asparagine. NAD(+)-binding positions include 11-12 (RI) and D33. Position 70 is a phosphotyrosine (Y70). Residue K89 is modified to N6-acetyllysine. Residue N92 is modified to Deamidated asparagine. K94 is subject to N6,N6-dimethyllysine. Position 98 is a deamidated asparagine (N98). T103 is modified (phosphothreonine). 2 residues coordinate NAD(+): R108 and S150. A phosphoserine mark is found at S150 and S176. The residue at position 177 (N177) is a Deamidated asparagine. The residue at position 179 (S179) is a Phosphoserine. 179-181 (SCT) is a D-glyceraldehyde 3-phosphate binding site. C180 acts as the Nucleophile in catalysis. ADP-ribosylcysteine; by autocatalysis; in irreversibly inhibited form is present on C180. Residue C180 is modified to Cysteine persulfide. C180 is modified (S-(2-succinyl)cysteine). C180 carries the post-translational modification S-nitrosocysteine; in reversibly inhibited form. Phosphothreonine is present on T181. Residue N183 is modified to Deamidated asparagine. Phosphothreonine is present on residues T205, T210, and T212. T210 contributes to the D-glyceraldehyde 3-phosphate binding site. Residue K214 forms a Glycyl lysine isopeptide (Lys-Gly) (interchain with G-Cter in SUMO2) linkage. K222 is subject to N6,N6-dimethyllysine; alternate. At K222 the chain carries N6-acetyllysine; alternate. Residue K222 is modified to N6-malonyllysine; alternate. Position 239 is a phosphothreonine (T239). 239–240 (TG) is a D-glyceraldehyde 3-phosphate binding site. K243 carries the post-translational modification N6,N6-dimethyllysine; alternate. An N6-malonyllysine; alternate modification is found at K243. K247 is subject to N6-acetyllysine. N253 carries the deamidated asparagine modification. N6,N6-dimethyllysine; alternate is present on K255. K255 is modified (N6-acetyllysine; alternate). T257 carries the post-translational modification Phosphothreonine. R262 is a binding site for D-glyceraldehyde 3-phosphate. T265 bears the Phosphothreonine mark. Position 269 is a phosphoserine (S269). Position 275 is an S-(2-succinyl)cysteine (C275). C275 bears the S-nitrosocysteine mark. Residue K282 is modified to N6-acetyllysine. K291 is subject to N6,N6-dimethyllysine. S340 carries the post-translational modification Phosphoserine. N344 carries the deamidated asparagine modification. N344 provides a ligand contact to NAD(+). At S361 the chain carries Phosphoserine. K362 bears the N6,N6-dimethyllysine mark.

It belongs to the glyceraldehyde-3-phosphate dehydrogenase family. As to quaternary structure, homotetramer. Interacts with TPPP; the interaction is direct. Interacts (when S-nitrosylated) with SIAH1; leading to nuclear translocation. Interacts with RILPL1/GOSPEL, leading to prevent the interaction between GAPDH and SIAH1 and prevent nuclear translocation. Interacts with CHP1; the interaction increases the binding of CHP1 with microtubules. Associates with microtubules. Interacts with EIF1AD, USP25, PRKCI and WARS1. Interacts with phosphorylated RPL13A; inhibited by oxidatively-modified low-densitity lipoprotein (LDL(ox)). Component of the GAIT complex. Interacts with FKBP6; leading to inhibit GAPDH catalytic activity. Interacts with TRAF2, promoting TRAF2 ubiquitination. Interacts with TRAF3, promoting TRAF3 ubiquitination. Post-translationally, ISGylated. S-nitrosylation of Cys-180 leads to interaction with SIAH1, followed by translocation to the nucleus S-nitrosylation of Cys-275 is induced by interferon-gamma and LDL(ox) implicating the iNOS-S100A8/9 transnitrosylase complex and seems to prevent interaction with phosphorylated RPL13A and to interfere with GAIT complex activity. In terms of processing, sulfhydration at Cys-180 increases catalytic activity.

Its subcellular location is the cytoplasm. The protein resides in the cytosol. It localises to the cytoskeleton. It is found in the nucleus. The enzyme catalyses D-glyceraldehyde 3-phosphate + phosphate + NAD(+) = (2R)-3-phospho-glyceroyl phosphate + NADH + H(+). It catalyses the reaction S-nitroso-L-cysteinyl-[GAPDH] + L-cysteinyl-[protein] = L-cysteinyl-[GAPDH] + S-nitroso-L-cysteinyl-[protein]. The protein operates within carbohydrate degradation; glycolysis; pyruvate from D-glyceraldehyde 3-phosphate: step 1/5. Its activity is regulated as follows. Glyceraldehyde-3-phosphate dehydrogenase activity is inhibited by fumarate, via the formation of S-(2-succinyl)cysteine residues. Has both glyceraldehyde-3-phosphate dehydrogenase and nitrosylase activities, thereby playing a role in glycolysis and nuclear functions, respectively. Glyceraldehyde-3-phosphate dehydrogenase is a key enzyme in glycolysis that catalyzes the first step of the pathway by converting D-glyceraldehyde 3-phosphate (G3P) into 3-phospho-D-glyceroyl phosphate. Modulates the organization and assembly of the cytoskeleton. Facilitates the CHP1-dependent microtubule and membrane associations through its ability to stimulate the binding of CHP1 to microtubules. Component of the GAIT (gamma interferon-activated inhibitor of translation) complex which mediates interferon-gamma-induced transcript-selective translation inhibition in inflammation processes. Upon interferon-gamma treatment assembles into the GAIT complex which binds to stem loop-containing GAIT elements in the 3'-UTR of diverse inflammatory mRNAs (such as ceruplasmin) and suppresses their translation. Also plays a role in innate immunity by promoting TNF-induced NF-kappa-B activation and type I interferon production, via interaction with TRAF2 and TRAF3, respectively. Participates in nuclear events including transcription, RNA transport, DNA replication and apoptosis. Nuclear functions are probably due to the nitrosylase activity that mediates cysteine S-nitrosylation of nuclear target proteins such as SIRT1, HDAC2 and PRKDC. The chain is Glyceraldehyde-3-phosphate dehydrogenase, muscle from Jaculus orientalis (Greater Egyptian jerboa).